Consider the following 169-residue polypeptide: Phosphopantetheine adenylyltransferase (169 aa).

Ser-10 lines the substrate pocket. Residues 10 to 11 and His-18 contribute to the ATP site; that span reads SF. Substrate is bound by residues Lys-42, Thr-79, and Arg-93. Residues 94-96, Glu-104, and 129-135 each bind ATP; these read GLR and VRPITAT.

It belongs to the bacterial CoaD family. As to quaternary structure, homohexamer. Mg(2+) serves as cofactor.

The protein resides in the cytoplasm. It carries out the reaction (R)-4'-phosphopantetheine + ATP + H(+) = 3'-dephospho-CoA + diphosphate. It participates in cofactor biosynthesis; coenzyme A biosynthesis; CoA from (R)-pantothenate: step 4/5. Its function is as follows. Reversibly transfers an adenylyl group from ATP to 4'-phosphopantetheine, yielding dephospho-CoA (dPCoA) and pyrophosphate. The chain is Phosphopantetheine adenylyltransferase from Rhodopseudomonas palustris (strain ATCC BAA-98 / CGA009).